The sequence spans 260 residues: HTH-type transcriptional repressor NanR (260 aa).

Residues 27–95 enclose the HTH gntR-type domain; that stretch reads KKLSEMVEEE…NGERARISRP (69 aa). Positions 55-74 form a DNA-binding region, H-T-H motif; sequence ERELMAFFNVGRPSVREALA.

This sequence belongs to the NanR family.

Transcriptional repressor that controls expression of the genes required for the catabolism of sialic acids. In Edwardsiella tarda (strain FL6-60), this protein is HTH-type transcriptional repressor NanR.